Reading from the N-terminus, the 280-residue chain is Putative sugar uptake protein (280 aa).

The next 10 membrane-spanning stretches (helical) occupy residues 4–21, 33–52, 56–78, 91–113, 117–136, 149–166, 176–195, 207–229, 233–255, and 262–279; these read LIAL…LIAG, MGLG…IHPA, ITIF…GQFI, LSTG…EWTS, YLIG…LTAI, IILL…SSFP, LFLP…LLVS, WLNI…SAQL, ITAF…FFIG, and ELIA…GAAI.

This sequence belongs to the GRP transporter (TC 2.A.7.5) family.

It is found in the cell membrane. The protein is Putative sugar uptake protein of Lactobacillus helveticus (Lactobacillus suntoryeus).